The primary structure comprises 248 residues: 5'-nucleotidase SurE (248 aa).

A divalent metal cation contacts are provided by Asp8, Asp9, Ser39, and Asn91.

Belongs to the SurE nucleotidase family. A divalent metal cation is required as a cofactor.

It is found in the cytoplasm. It carries out the reaction a ribonucleoside 5'-phosphate + H2O = a ribonucleoside + phosphate. In terms of biological role, nucleotidase that shows phosphatase activity on nucleoside 5'-monophosphates. The polypeptide is 5'-nucleotidase SurE (Citrifermentans bemidjiense (strain ATCC BAA-1014 / DSM 16622 / JCM 12645 / Bem) (Geobacter bemidjiensis)).